Consider the following 176-residue polypeptide: Ribosome maturation factor RimM (176 aa).

One can recognise a PRC barrel domain in the interval 99 to 173; that stretch reads ADEYYWHDLL…TMTITPLEGL (75 aa).

This sequence belongs to the RimM family. Binds ribosomal protein uS19.

It localises to the cytoplasm. Its function is as follows. An accessory protein needed during the final step in the assembly of 30S ribosomal subunit, possibly for assembly of the head region. Essential for efficient processing of 16S rRNA. May be needed both before and after RbfA during the maturation of 16S rRNA. It has affinity for free ribosomal 30S subunits but not for 70S ribosomes. This Trichlorobacter lovleyi (strain ATCC BAA-1151 / DSM 17278 / SZ) (Geobacter lovleyi) protein is Ribosome maturation factor RimM.